The primary structure comprises 590 residues: MGFRLITQLKGMSVFLVLFPTLLLVMLTGAQRACPKNCRCDGKIVYCESHAFADIPENISGGSQGLSLRFNSIQKLKSNQFAGLNQLIWLYLDHNYISSVDEDAFQGIRRLKELILSSNKITYLHNKTFHPVPNLRNLDLSYNKLQTLQSEQFKGLRKLIILHLRSNSLKTVPIRVFQDCRNLDFLDLGYNRLRSLSRNAFAGLLKLKELHLEHNQFSKINFAHFPRLFNLRSIYLQWNRIRSVSQGLTWTWSSLHTLDLSGNDIQAIEPGTFKCLPNLQKLNLDSNKLTNVSQETVNAWISLISITLSGNMWECSRSICPLFYWLKNFKGNKESTMICAGPKHIQGEKVSDAVETYNICSDVQVVNTERSHLAPQTPQKPPFIPKPTIFKPDAVPATLEAVSPSPGFQIPGTDHEYEHVSFHKIIAGSVALFLSVAMILLVIYVSWKRYPASMKQLQQHSLMKRRRKKARESERQMNSPLQEYYVDYKPTNSETMDISVNGSGPCTYTISGSRECEIPHHVKPLPYYSYDQPVIGYCQAHQPLHINKAYEAVSIEQDDSPSLELGRDHSFIATIARSAAPAIYLERITN.

Positions 1–30 (MGFRLITQLKGMSVFLVLFPTLLLVMLTGA) are cleaved as a signal peptide. The 31-residue stretch at 31 to 61 (QRACPKNCRCDGKIVYCESHAFADIPENISG) folds into the LRRNT domain. The Extracellular segment spans residues 31 to 424 (QRACPKNCRC…HEYEHVSFHK (394 aa)). The N-linked (GlcNAc...) asparagine glycan is linked to Asn58. LRR repeat units follow at residues 62 to 83 (GSQG…QFAG), 86 to 107 (QLIW…AFQG), 110 to 131 (RLKE…TFHP), 134 to 155 (NLRN…QFKG), 158 to 179 (KLII…VFQD), 182 to 203 (NLDF…AFAG), 206 to 226 (KLKE…AHFP), 230 to 251 (NLRS…LTWT), 254 to 275 (SLHT…TFKC), and 278 to 299 (NLQK…TVNA). An N-linked (GlcNAc...) asparagine glycan is attached at Asn126. N-linked (GlcNAc...) asparagine glycosylation is present at Asn291. The region spanning 311-362 (NMWECSRSICPLFYWLKNFKGNKESTMICAGPKHIQGEKVSDAVETYNICSD) is the LRRCT domain. The chain crosses the membrane as a helical span at residues 425–445 (IIAGSVALFLSVAMILLVIYV). At 446-590 (SWKRYPASMK…PAIYLERITN (145 aa)) the chain is on the cytoplasmic side.

It belongs to the LRRTM family. Peripherally associated with AMPAR complex. AMPAR complex consists of an inner core made of 4 pore-forming GluA/GRIA proteins (GRIA1, GRIA2, GRIA3 and GRIA4) and 4 major auxiliary subunits arranged in a twofold symmetry. One of the two pairs of distinct binding sites is occupied either by CNIH2, CNIH3 or CACNG2, CACNG3. The other harbors CACNG2, CACNG3, CACNG4, CACNG8 or GSG1L. This inner core of AMPAR complex is complemented by outer core constituents binding directly to the GluA/GRIA proteins at sites distinct from the interaction sites of the inner core constituents. Outer core constituents include at least PRRT1, PRRT2, CKAMP44/SHISA9, FRRS1L and NRN1. The proteins of the inner and outer core serve as a platform for other, more peripherally associated AMPAR constituents, including LRRTM4. Alone or in combination, these auxiliary subunits control the gating and pharmacology of the AMPAR complex and profoundly impact their biogenesis and protein processing. In terms of tissue distribution, predominantly in the brain (at protein level). Also expressed in the cerebellum and other tissues.

It is found in the cell membrane. The protein localises to the postsynaptic cell membrane. May play a role in the development and maintenance of the vertebrate nervous system. Exhibits strong synaptogenic activity, restricted to excitatory presynaptic differentiation. The chain is Leucine-rich repeat transmembrane neuronal protein 4 (Lrrtm4) from Mus musculus (Mouse).